Consider the following 43-residue polypeptide: Subtilosin-A (43 aa).

A propeptide spanning residues 1–8 (MKKAVIVE) is cleaved from the precursor. Residues 9–43 (NKGCATCSIGAACLVDGPIPDFEIAGATGLFGLWG) constitute a cross-link (cyclopeptide (Asn-Gly)). The 2-cysteinyl-D-phenylalanine (Cys-Phe) cross-link spans 12 to 39 (CATCSIGAACLVDGPIPDFEIAGATGLF). Positions 15-36 (CSIGAACLVDGPIPDFEIAGAT) form a cross-link, 2-cysteinyl-D-allo-threonine (Cys-Thr). Residues 21 to 30 (CLVDGPIPDF) constitute a cross-link (2-cysteinyl-L-phenylalanine (Cys-Phe)).

This sequence belongs to the bacteriocin class V family. This sactipeptide undergoes unique processing steps that include proteolytic cleavage after Glu-8, and covalent linkage of the alpha-amino of Asn-9 with the carboxyl of Gly-43 to form a cyclopeptide. Thioether cross-links are formed between cysteines and the alpha-carbons of other amino acids, Cys-12 to Phe-39, Cys-15 to Thr-36, and Cys-21 to Phe-30. In forming these cross-links, Thr-36 and Phe-39 are converted to D-amino acids. Propeptide cleavage and cyclopeptide formation only occur after all 3 thioether cross-links are formed.

The protein resides in the secreted. Its function is as follows. Has bacteriocidal activity against some Gram-positive bacteria such as Listeria, some species of Bacillus and E.faecium. A single mutation (Thr-14-Ile) confers hemolytic activity against rabbit and human blood. The protein is Subtilosin-A (sboA) of Bacillus subtilis (strain 168).